The following is a 439-amino-acid chain: Microfibrillar-associated protein 1 (439 aa).

The span at 1–17 (MSVPSSLMKQPPIQSTA) shows a compositional bias: polar residues. The tract at residues 1–200 (MSVPSSLMKQ…SEDEMEPRLK (200 aa)) is disordered. S2 carries the post-translational modification N-acetylserine. A compositionally biased stretch (basic and acidic residues) spans 23-34 (RNEKGEISMEKV). Phosphoserine is present on residues S52 and S53. The span at 61–70 (QFIKKAKEQE) shows a compositional bias: basic and acidic residues. K67 is covalently cross-linked (Glycyl lysine isopeptide (Lys-Gly) (interchain with G-Cter in SUMO2)). Over residues 71 to 81 (AEPEEQEEDSS) the composition is skewed to acidic residues. Phosphoserine occurs at positions 94, 116, 118, 132, and 133. 2 stretches are compositionally biased toward acidic residues: residues 112–122 (VVGESDSEVEG) and 131–144 (DSSE…DEEE). Over residues 145–163 (IERRRGMMRQRAQERKNEE) the composition is skewed to basic and acidic residues. Residues 178–195 (ESESESEYEEYTDSEDEM) are compositionally biased toward acidic residues. K249 is covalently cross-linked (Glycyl lysine isopeptide (Lys-Gly) (interchain with G-Cter in SUMO2)). At T267 the chain carries Phosphothreonine. Residue K357 forms a Glycyl lysine isopeptide (Lys-Gly) (interchain with G-Cter in SUMO2) linkage. Phosphoserine is present on S361. Residues K371, K381, K415, and K418 each participate in a glycyl lysine isopeptide (Lys-Gly) (interchain with G-Cter in SUMO2) cross-link. Phosphoserine is present on S432.

This sequence belongs to the MFAP1 family. Component of the spliceosome B complex. Interacts with PRPF38A (via N-terminal interaction domain).

It is found in the nucleus. Functionally, involved in pre-mRNA splicing as a component of the spliceosome. The protein is Microfibrillar-associated protein 1 of Bos taurus (Bovine).